The following is a 261-amino-acid chain: Cytochrome c oxidase subunit 3 (261 aa).

The Mitochondrial matrix segment spans residues 1–15 (MTHQTHAYHMVNPSP). Residues 16–34 (WPLTGALSALLMTSGLIMW) traverse the membrane as a helical segment. The Mitochondrial intermembrane segment spans residues 35 to 40 (FHYNSM). Residues 41 to 66 (SLLTLGFTTNLLTMYQWWRDVIREGT) traverse the membrane as a helical segment. Over 67–72 (FQGHHT) the chain is Mitochondrial matrix. A helical transmembrane segment spans residues 73 to 105 (PIVQKGLRYGMVLFIVSEVFFFAGFFWAFYHSS). At 106–128 (LAPTPELGGCWPPTGIIPLNPLE) the chain is on the mitochondrial intermembrane side. A helical transmembrane segment spans residues 129-152 (VPLLNTSVLLASGVSITWAHHSLM). Residues 153–155 (EGN) are Mitochondrial matrix-facing. Residues 156 to 183 (RKHMLQALFITISLGVYFTLLQASEYYE) form a helical membrane-spanning segment. Residues 184–190 (TSFTISD) lie on the Mitochondrial intermembrane side of the membrane. Residues 191–223 (GVYGSTFFMATGFHGLHVIIGSTFLIVCFLRQL) traverse the membrane as a helical segment. The Mitochondrial matrix portion of the chain corresponds to 224–232 (YYHFTSNHH). A helical membrane pass occupies residues 233 to 256 (FGFEAAAWYWHFVDVVWLFLYVSI). Residues 257–261 (YWWGS) lie on the Mitochondrial intermembrane side of the membrane.

It belongs to the cytochrome c oxidase subunit 3 family. In terms of assembly, component of the cytochrome c oxidase (complex IV, CIV), a multisubunit enzyme composed of 14 subunits. The complex is composed of a catalytic core of 3 subunits MT-CO1, MT-CO2 and MT-CO3, encoded in the mitochondrial DNA, and 11 supernumerary subunits COX4I, COX5A, COX5B, COX6A, COX6B, COX6C, COX7A, COX7B, COX7C, COX8 and NDUFA4, which are encoded in the nuclear genome. The complex exists as a monomer or a dimer and forms supercomplexes (SCs) in the inner mitochondrial membrane with NADH-ubiquinone oxidoreductase (complex I, CI) and ubiquinol-cytochrome c oxidoreductase (cytochrome b-c1 complex, complex III, CIII), resulting in different assemblies (supercomplex SCI(1)III(2)IV(1) and megacomplex MCI(2)III(2)IV(2)).

It localises to the mitochondrion inner membrane. It catalyses the reaction 4 Fe(II)-[cytochrome c] + O2 + 8 H(+)(in) = 4 Fe(III)-[cytochrome c] + 2 H2O + 4 H(+)(out). In terms of biological role, component of the cytochrome c oxidase, the last enzyme in the mitochondrial electron transport chain which drives oxidative phosphorylation. The respiratory chain contains 3 multisubunit complexes succinate dehydrogenase (complex II, CII), ubiquinol-cytochrome c oxidoreductase (cytochrome b-c1 complex, complex III, CIII) and cytochrome c oxidase (complex IV, CIV), that cooperate to transfer electrons derived from NADH and succinate to molecular oxygen, creating an electrochemical gradient over the inner membrane that drives transmembrane transport and the ATP synthase. Cytochrome c oxidase is the component of the respiratory chain that catalyzes the reduction of oxygen to water. Electrons originating from reduced cytochrome c in the intermembrane space (IMS) are transferred via the dinuclear copper A center (CU(A)) of subunit 2 and heme A of subunit 1 to the active site in subunit 1, a binuclear center (BNC) formed by heme A3 and copper B (CU(B)). The BNC reduces molecular oxygen to 2 water molecules using 4 electrons from cytochrome c in the IMS and 4 protons from the mitochondrial matrix. This Canis lupus (Gray wolf) protein is Cytochrome c oxidase subunit 3 (MT-CO3).